The following is a 236-amino-acid chain: Small ribosomal subunit protein uS2c (236 aa).

It belongs to the universal ribosomal protein uS2 family.

Its subcellular location is the plastid. The protein localises to the chloroplast. The sequence is that of Small ribosomal subunit protein uS2c (rps2) from Liriodendron tulipifera (Tuliptree).